The primary structure comprises 208 residues: Protein IncB (208 aa).

In terms of biological role, this protein is thought to be cis acting and to contain the putative attachment site on the DNA for the cellular partition apparatus. The polypeptide is Protein IncB (incB) (Escherichia coli).